Reading from the N-terminus, the 391-residue chain is Phosphatidate cytidylyltransferase 4, chloroplastic (391 aa).

The transit peptide at 1-61 directs the protein to the chloroplast; sequence MATFAELVLS…SVSRRFLTAV (61 aa). 6 helical membrane passes run 102 to 122, 175 to 195, 202 to 222, 254 to 274, 298 to 318, and 321 to 341; these read IFGI…GWVF, FGNI…ALLV, FAQL…PSFW, VGLV…TFAF, IVGL…LSWP, and LFSS…GDLT.

It belongs to the CDS family. The cofactor is Mg(2+).

It localises to the plastid. Its subcellular location is the chloroplast membrane. It catalyses the reaction a 1,2-diacyl-sn-glycero-3-phosphate + CTP + H(+) = a CDP-1,2-diacyl-sn-glycerol + diphosphate. The protein operates within phospholipid metabolism; CDP-diacylglycerol biosynthesis; CDP-diacylglycerol from sn-glycerol 3-phosphate: step 3/3. Its activity is regulated as follows. Highest activities is obtained at about 30 mM CTP and 2 mM phosphatidic acid (PA). Its function is as follows. May be involved in the synthesis of minor phospholipids and in modulation of IP3-mediated signal transduction. Promotes the biosynthesis of plastidial phosphatidylglycerol (PG) which is required for structure and function of thylakoid membranes and, hence, for photoautotrophic growth. The chain is Phosphatidate cytidylyltransferase 4, chloroplastic from Arabidopsis thaliana (Mouse-ear cress).